The sequence spans 434 residues: Epimerase FSL3 (434 aa).

Residue 125–126 (GF) participates in substrate binding. Glu-392 functions as the Proton acceptor in the catalytic mechanism.

It belongs to the aldose epimerase family. Monomer.

It participates in secondary metabolite biosynthesis. Epimerase; part of the gene cluster that mediates the biosynthesis of fusarielins F, G and H, decaketide compounds with 5 methylations and a decaline core that act as mycoestrogens as they stimulate growth of MCF-7 breast cancer cells. The initial compound in the pathway is produced by the reducing polyketide synthase FSL1. FSL1 lacks an active enoyl reductase (ER) domain and biosynthesis of fusarielins relies on the trans-acting enoyl reductase FSL5, before it is released through hydrolysis catalyzed by the thioesterase FSL2. Fusarielins F, G, and H have a C11=C12 cis double bond and is fully reduced between C10 and C11 and between C12 and C13. FSL3 can be involved in the formation of the C11=C12 cis double bond by moving a hypothetical C10=C11 or C12=C13 trans double bond to form prefusarielin. Prefusarielin is oxygenated at C15 and C16 by the cytochrome P450 monooxygenase FSL4, resulting in fusarielin F, which subsequently is epoxidized into fusarielin G by the same enzyme. The final step in the pathway is a reduction of the carboxylic acid moiety to yield fusarielin H via a still undetermined mechanism. In Gibberella zeae (strain ATCC MYA-4620 / CBS 123657 / FGSC 9075 / NRRL 31084 / PH-1) (Wheat head blight fungus), this protein is Epimerase FSL3.